We begin with the raw amino-acid sequence, 825 residues long: 5E5 antigen (825 aa).

The disordered stretch occupies residues 126-825; the sequence is LSRDGYETET…RPRPSPKSPR (700 aa). The segment covering 157–180 has biased composition (pro residues); the sequence is PRAPPEPPDPGAPRPPPDPGPLPL. The span at 191–200 shows a compositional bias: polar residues; sequence VQVSTEQLLM. The span at 217 to 237 shows a compositional bias: basic and acidic residues; sequence TRGDRTQEGGEKPREQREGPR. A compositionally biased stretch (low complexity) spans 247–256; it reads QQEESPQQEP. Basic and acidic residues-rich tracts occupy residues 257–277, 315–342, and 392–406; these read SSER…HEGE, VPKD…RDWT, and QERE…ESPR. Residues 437–449 show a composition bias toward basic residues; it reads RRPRKRRGRKGRM. Residues 455 to 477 show a composition bias toward low complexity; it reads TTATSASATGGPAEEAGASAPEG. Residues 485-505 are compositionally biased toward basic residues; the sequence is GRARGPRQQARRRHGPQRRRG. Residues 524–536 show a composition bias toward polar residues; it reads GTTSGEQRADQSQ. Residues 537-562 are compositionally biased toward low complexity; it reads TLPALAGAPTAHAHAVPGPGPAAATL. Over residues 565-575 the composition is skewed to basic residues; that stretch reads RGRRGSWRGGR. Gly residues predominate over residues 576–588; sequence RGGGAGASGGGRG. The segment covering 721–733 has biased composition (pro residues); it reads FPPPPPTRPPPVL. Low complexity predominate over residues 734–750; the sequence is LPLLRLTCAGDPGASRP.

As to expression, expressed in neurons.

Its subcellular location is the nucleus. Its function is as follows. Might have DNA-binding ability. This is 5E5 antigen from Rattus norvegicus (Rat).